The following is a 1194-amino-acid chain: MRTNCWWRLSGYVMRHRRDLLLGFGAALAGTVIAVLVPLVTKRVIDDAIAADHRPLAPWAVVLVAAAGATYLLTYVRRYYGGRIAHLVQHDLRMDAFQALLRWDGRQQDRWSSGQLIVRTTNDLQLVQALLFDVPNVLRHVLTLLLGVAVMTWLSVPLALLAVLLVPVIGLIAHRSRRLLAAATHCAQEHKAAVTGVVDAAVCGIRVVKAFGQEERETVKLVMASRALYAAQLRVARLNAHFGPLLQTLPALGQMAVFALGGWMAAQGSITVGTFVAFWACLTLLARPACDLAGMLTIAQQARAGAVRVLELIDSRPTLVDGTKPLSLEARLSLEFQRVSFGYVADRPVLREISLSVRAGETLAVVGAPGSGKSTLASLATRCYDVTQGAVRIGGQDVRELTLDSLRSAIGLVPEDAVLFSGTIGANIAYGRPDATPEQIATAARAAHIEEFVNTLPDGYQTAVGARGLTLSGGQRQRIALARALLHQPRLLIMDDPTSAVDAVIECGIQEVLREAIADRTAVIFTRRRSMLTLADRVAVLDSGRLLDVGTPDEVWERCPRYRELLSPAPDLADDLVVAERSPVCRPVAGLGTKAAQHTNVHNPGPHDHPPGPDPLRRLLREFRGPLALSLLLVAVQTCAGLLPPLLIRHGIDVGIRRHVLSALWWAALAGTATVVIRWVVQWGSAMVAGYTGEQVLFRLRSVVFAHAQRLGLDAFEDDGDAQIVTAVTADVEAIVAFLRTGLVVAVISVVTLVGILVALLAIRARLVLLIFTTMPVLALATWQFRRASNWTYRRARHRLGTVTATLREYAAGLRIAQAFRAEYRGLQSYFAHSDDYRRLGVRGQRLLALYYPFVALLCSLATTLVLLDGAREVRAGVISVGALVTYLLYIELLYTPIGELAQMFDDYQRAAVAAGRIRSLLSTRTPSSPAARPVGTLRGEVVFDAVHYSYRTREVPALAGINLRIPAGQTVVFVGSTGSGKSTLIKLVARFYDPTHGTVRVDGCDLREFDVDGYRNRLGIVTQEQYVFAGTVRDAIAYGRPDATDAQVERAAREVGAHPMITALDNGYLHQVTAGGRNLSAGQLQLLALARARLVDPDILLLDEATVALDPATEAVVQRATLTLAARRTTLIVAHGLAIAEHADRIVVLEHGTVVEDGAHTELLAAGGHYSRLWAAHTRLCSPEITQLQCIDA.

Helical transmembrane passes span 20-40 (LLLGFGAALAGTVIAVLVPLV), 56-76 (LAPWAVVLVAAAGATYLLTYV), 130-150 (LLFDVPNVLRHVLTLLLGVAV), 153-173 (WLSVPLALLAVLLVPVIGLIA), 258-278 (FALGGWMAAQGSITVGTFVAF), and 279-299 (WACLTLLARPACDLAGMLTIA). The region spanning 21-301 (LLGFGAALAG…LAGMLTIAQQ (281 aa)) is the ABC transmembrane type-1 1 domain. An ABC transporter 1 domain is found at 334–568 (LEFQRVSFGY…CPRYRELLSP (235 aa)). 367–374 (GAPGSGKS) serves as a coordination point for ATP. 6 helical membrane-spanning segments follow: residues 628–648 (ALSLLLVAVQTCAGLLPPLLI), 660–680 (VLSALWWAALAGTATVVIRWV), 743–763 (LVVAVISVVTLVGILVALLAI), 765–785 (ARLVLLIFTTMPVLALATWQF), 847–867 (LLALYYPFVALLCSLATTLVL), and 878–898 (VISVGALVTYLLYIELLYTPI). Residues 628–910 (ALSLLLVAVQ…LAQMFDDYQR (283 aa)) form the ABC transmembrane type-1 2 domain. The 236-residue stretch at 942-1177 (VVFDAVHYSY…GGHYSRLWAA (236 aa)) folds into the ABC transporter 2 domain. An ATP-binding site is contributed by 976–983 (GSTGSGKS).

It belongs to the ABC transporter superfamily. Lipid exporter (TC 3.A.1.106) family.

The protein localises to the cell inner membrane. Functionally, overexpression increases resistance to chloramphenicol, ampicillin, streptomycin, tetracyclin and vancomycin. The polypeptide is Multidrug efflux ATP-binding/permease protein BCG_0231 (Mycobacterium bovis (strain BCG / Pasteur 1173P2)).